We begin with the raw amino-acid sequence, 92 residues long: MTKLAQWLWGLAILGSTWVALTTGALGLELPLSCQEVLWPLPAYLLVSAGCYALGTVGYRVATFHDCEDAARELQSQIQEARADLARRGLRF.

The next 2 membrane-spanning stretches (helical) occupy residues 8-28 (LWGL…ALGL) and 37-57 (VLWP…LGTV).

This sequence belongs to the DPM3 family. Component of the dolichol-phosphate mannose (DPM) synthase complex composed of DPM1, DPM2 and DPM3; within the complex, associates with DPM1 via its C-terminal domain and with DPM2 via its N-terminal portion. This interaction stabilizes DPM1 protein.

It localises to the endoplasmic reticulum membrane. It functions in the pathway protein modification; protein glycosylation. Its function is as follows. Stabilizer subunit of the dolichol-phosphate mannose (DPM) synthase complex; tethers catalytic subunit DPM1 to the endoplasmic reticulum. In Homo sapiens (Human), this protein is Dolichol-phosphate mannosyltransferase subunit 3 (DPM3).